We begin with the raw amino-acid sequence, 130 residues long: MSMQDPIADMLTRIRNGQSANKVAVTMPSSKLKVAIANVLKEEGFIEDFKVEGDAKPVLELALKYFQGKAVVESIQRISRPGLRIYKKKDELPKVMAGLGIAVISTSKGVMTDRAARQAGLGGEIICYVA.

Belongs to the universal ribosomal protein uS8 family. Part of the 30S ribosomal subunit. Contacts proteins S5 and S12.

One of the primary rRNA binding proteins, it binds directly to 16S rRNA central domain where it helps coordinate assembly of the platform of the 30S subunit. This chain is Small ribosomal subunit protein uS8, found in Yersinia enterocolitica serotype O:8 / biotype 1B (strain NCTC 13174 / 8081).